Consider the following 626-residue polypeptide: Janus kinase and microtubule-interacting protein 1 (626 aa).

The tract at residues 1-25 (MSKKGRSKGEKPETETDSVQMANEE) is disordered. Residues 1 to 365 (MSKKGRSKGE…KLKSLTRENV (365 aa)) form a mediates association with microtubules region. Coiled coils occupy residues 13-255 (ETET…EAER) and 284-413 (ERDV…DDLS). Residues 365 to 626 (VEMKEKLSAQ…ILFEPKLKFV (262 aa)) form a mediates interaction with TYK2 and GABBR1 region. Ser382 carries the phosphoserine modification. Residues 452–461 (ETLSETSYNT) are compositionally biased toward polar residues. Residues 452–481 (ETLSETSYNTDRTDRTPATPEEDLDETTTR) are disordered. At Thr470 the chain carries Phosphothreonine. Residues 490 to 604 (QLTREYQALQ…EFRVLELEVR (115 aa)) are a coiled coil.

It belongs to the JAKMIP family. In terms of assembly, homodimer. Interacts with JAK1 and TYK2. Forms a complex with GABBR1 and KIF5B/kinesin-1. Post-translationally, phosphorylated. As to expression, specifically expressed in brain and testis by spermatogonia, spermatocytes, spermatozoa and Sertoli cells (at protein level).

It is found in the cytoplasm. The protein resides in the cytoskeleton. The protein localises to the membrane. Functionally, associates with microtubules and may play a role in the microtubule-dependent transport of the GABA-B receptor. May play a role in JAK1 signaling and regulate microtubule cytoskeleton rearrangements. This chain is Janus kinase and microtubule-interacting protein 1 (Jakmip1), found in Rattus norvegicus (Rat).